The following is a 436-amino-acid chain: Serine--tRNA ligase (436 aa).

L-serine is bound at residue 241–243; that stretch reads TSE. 272–274 is an ATP binding site; that stretch reads RAE. Glu295 is an L-serine binding site. Residue 359-362 coordinates ATP; the sequence is EISS. Residue Ser395 participates in L-serine binding.

Belongs to the class-II aminoacyl-tRNA synthetase family. Type-1 seryl-tRNA synthetase subfamily. In terms of assembly, homodimer. The tRNA molecule binds across the dimer.

It localises to the cytoplasm. The catalysed reaction is tRNA(Ser) + L-serine + ATP = L-seryl-tRNA(Ser) + AMP + diphosphate + H(+). The enzyme catalyses tRNA(Sec) + L-serine + ATP = L-seryl-tRNA(Sec) + AMP + diphosphate + H(+). It functions in the pathway aminoacyl-tRNA biosynthesis; selenocysteinyl-tRNA(Sec) biosynthesis; L-seryl-tRNA(Sec) from L-serine and tRNA(Sec): step 1/1. Its function is as follows. Catalyzes the attachment of serine to tRNA(Ser). Is also able to aminoacylate tRNA(Sec) with serine, to form the misacylated tRNA L-seryl-tRNA(Sec), which will be further converted into selenocysteinyl-tRNA(Sec). In Beijerinckia indica subsp. indica (strain ATCC 9039 / DSM 1715 / NCIMB 8712), this protein is Serine--tRNA ligase.